Reading from the N-terminus, the 203-residue chain is Secreted phosphoprotein 24 (203 aa).

An N-terminal signal peptide occupies residues methionine 1 to glycine 23. 2 disulfide bridges follow: cysteine 86/cysteine 96 and cysteine 109/cysteine 127. Serine 90 is subject to Phosphoserine. 5 positions are modified to phosphoserine: serine 137, serine 138, serine 162, serine 165, and serine 174.

The protein belongs to the SPP2 family. In terms of processing, phosphorylation sites are present in the extracellular medium.

The protein resides in the secreted. Functionally, could coordinate an aspect of bone turnover. This chain is Secreted phosphoprotein 24 (Spp2), found in Mus musculus (Mouse).